Consider the following 160-residue polypeptide: Sulfur-rich protein (160 aa).

Helical transmembrane passes span isoleucine 63 to leucine 83 and phenylalanine 92 to methionine 112.

It is found in the membrane. The protein is Sulfur-rich protein (srp) of Chlamydia abortus (strain DSM 27085 / S26/3) (Chlamydophila abortus).